Consider the following 561-residue polypeptide: NAD(P)H-quinone oxidoreductase chain 4 2 (561 aa).

The next 14 membrane-spanning stretches (helical) occupy residues 6-26 (FPWL…IPFI), 36-56 (WYGL…FWKY), 87-107 (LSMP…FAAW), 115-135 (LFYF…VAQD), 136-156 (LMLL…LISI), 169-189 (FLLY…GMAL), 210-230 (AFEL…LAVF), 244-264 (SAPV…YGLI), 275-295 (HVYF…YGGL), 312-332 (VAHM…GISG), 333-353 (ALLQ…LAGV), 376-396 (IFAL…MSGF), 419-439 (VTVF…LSML), and 490-510 (VAIA…PKIA).

It belongs to the complex I subunit 4 family.

Its subcellular location is the cellular thylakoid membrane. The enzyme catalyses a plastoquinone + NADH + (n+1) H(+)(in) = a plastoquinol + NAD(+) + n H(+)(out). The catalysed reaction is a plastoquinone + NADPH + (n+1) H(+)(in) = a plastoquinol + NADP(+) + n H(+)(out). NDH-1 shuttles electrons from NAD(P)H, via FMN and iron-sulfur (Fe-S) centers, to quinones in the respiratory chain. The immediate electron acceptor for the enzyme in this species is believed to be plastoquinone. Couples the redox reaction to proton translocation (for every two electrons transferred, four hydrogen ions are translocated across the cytoplasmic membrane), and thus conserves the redox energy in a proton gradient. The sequence is that of NAD(P)H-quinone oxidoreductase chain 4 2 from Trichodesmium erythraeum (strain IMS101).